Reading from the N-terminus, the 299-residue chain is 4-diphosphocytidyl-2-C-methyl-D-erythritol kinase (299 aa).

The active site involves Lys20. 106-116 is a binding site for ATP; sequence PMGGGLGGGSS. Asp148 is a catalytic residue.

Belongs to the GHMP kinase family. IspE subfamily. Homodimer.

The catalysed reaction is 4-CDP-2-C-methyl-D-erythritol + ATP = 4-CDP-2-C-methyl-D-erythritol 2-phosphate + ADP + H(+). It functions in the pathway isoprenoid biosynthesis; isopentenyl diphosphate biosynthesis via DXP pathway; isopentenyl diphosphate from 1-deoxy-D-xylulose 5-phosphate: step 3/6. Functionally, catalyzes the phosphorylation of the position 2 hydroxy group of 4-diphosphocytidyl-2C-methyl-D-erythritol. In Yersinia pseudotuberculosis serotype O:1b (strain IP 31758), this protein is 4-diphosphocytidyl-2-C-methyl-D-erythritol kinase.